Here is a 737-residue protein sequence, read N- to C-terminus: Delta and Notch-like epidermal growth factor-related receptor (737 aa).

An N-terminal signal peptide occupies residues 1–25; sequence MPPRRAQAPGAPLLPVLALLPLLLG. Topologically, residues 26-640 are extracellular; sequence AGPQSGCLAS…LTNMPRHSLY (615 aa). 2 EGF-like domains span residues 44–92 and 94–133; these read APGP…TYCQ and VADP…LNCE. The interaction with NOTCH1 stretch occupies residues 44-133; the sequence is APGPCASQPC…NDGYEGLNCE (90 aa). 6 disulfides stabilise this stretch: Cys48/Cys59, Cys53/Cys80, Cys82/Cys91, Cys98/Cys108, Cys103/Cys121, and Cys123/Cys132. Asn204 carries N-linked (GlcNAc...) asparagine glycosylation. 5 consecutive EGF-like domains span residues 309–348, 349–390, 392–428, 430–466, and 468–503; these read PGDS…TFCE, EFDA…ELCQ, KIDY…SACE, KVDP…PTCA, and LVDF…LYCE. Disulfide bonds link Cys319–Cys336, Cys338–Cys347, Cys353–Cys364, Cys358–Cys378, Cys380–Cys389, Cys396–Cys407, Cys401–Cys416, Cys418–Cys427, Cys434–Cys445, Cys439–Cys454, Cys456–Cys465, Cys472–Cys482, Cys477–Cys491, Cys493–Cys502, Cys509–Cys520, Cys514–Cys529, Cys531–Cys540, Cys547–Cys558, Cys552–Cys567, Cys569–Cys578, Cys585–Cys596, Cys590–Cys605, and Cys607–Cys616. Residues 505–541 enclose the EGF-like 8; calcium-binding domain; the sequence is EYNECLSAPCLNAATCRDLINGYECVCLAEYKGTHCE. The EGF-like 9 domain maps to 543 to 579; sequence YKDPCANISCLNGGTCDSEGLNGTCICAPGFTGEECD. Asn564 carries N-linked (GlcNAc...) asparagine glycosylation. Residues 581–617 form the EGF-like 10; calcium-binding domain; the sequence is DINECDSNPCHHAGTCLDQPNGYTCHCPHGWVGANCE. The chain crosses the membrane as a helical span at residues 641–661; sequence IIIGALCVAFILMLIILIVGI. The Cytoplasmic portion of the chain corresponds to 662–737; the sequence is CRISRIEYQG…LVTLIKTKDL (76 aa). Residues 677 to 680 are interaction with AP1G1 and somatodendritic targeting; that stretch reads YEEF. Ser685 carries the phosphoserine modification. Tyr711 carries the post-translational modification Phosphotyrosine. Thr714 carries the post-translational modification Phosphothreonine. At Tyr721 the chain carries Phosphotyrosine. Ser722 carries the post-translational modification Phosphoserine.

Interacts with AP1G1. Interacts with NOTCH1. N-glycosylated. In terms of tissue distribution, specifically expressed in brain neurons (at protein level).

The protein resides in the cell membrane. Its function is as follows. Mediates neuron-glia interaction during astrocytogenesis. May promote differentiation of Bergmann glia during cerebellar development by activating DELTEX-dependent NOTCH1 signaling. The protein is Delta and Notch-like epidermal growth factor-related receptor (Dner) of Mus musculus (Mouse).